Here is a 162-residue protein sequence, read N- to C-terminus: Small ribosomal subunit protein uS13 (162 aa).

The tract at residues 142 to 162 (RGQRTKSTGRRGSTVGVSRKK) is disordered.

This sequence belongs to the universal ribosomal protein uS13 family. As to quaternary structure, part of the 30S ribosomal subunit. Forms a loose heterodimer with protein S19. Forms two bridges to the 50S subunit in the 70S ribosome.

Functionally, located at the top of the head of the 30S subunit, it contacts several helices of the 16S rRNA. In the 70S ribosome it contacts the 23S rRNA (bridge B1a) and protein L5 of the 50S subunit (bridge B1b), connecting the 2 subunits; these bridges are implicated in subunit movement. The protein is Small ribosomal subunit protein uS13 of Methanosarcina mazei (strain ATCC BAA-159 / DSM 3647 / Goe1 / Go1 / JCM 11833 / OCM 88) (Methanosarcina frisia).